The primary structure comprises 208 residues: 3-demethoxyubiquinol 3-hydroxylase (208 aa).

The Fe cation site is built by E57, E87, H90, E139, E171, and H174.

Belongs to the COQ7 family. Requires Fe cation as cofactor.

It localises to the cell membrane. The enzyme catalyses a 5-methoxy-2-methyl-3-(all-trans-polyprenyl)benzene-1,4-diol + AH2 + O2 = a 3-demethylubiquinol + A + H2O. It participates in cofactor biosynthesis; ubiquinone biosynthesis. Functionally, catalyzes the hydroxylation of 2-nonaprenyl-3-methyl-6-methoxy-1,4-benzoquinol during ubiquinone biosynthesis. This Burkholderia lata (strain ATCC 17760 / DSM 23089 / LMG 22485 / NCIMB 9086 / R18194 / 383) protein is 3-demethoxyubiquinol 3-hydroxylase.